Consider the following 573-residue polypeptide: Vacuolar protein 8 (573 aa).

Residues 1 to 36 (MAASAADRMGRQRMSGLSCSAPPRPTVVTNPGNKQD) are disordered. Over residues 27–36 (VVTNPGNKQD) the composition is skewed to polar residues. ARM repeat units lie at residues 60 to 97 (NRGEVDFFSNGPLRALSTLVYSDNIDLQRSAALAFAEI), 98 to 137 (TEKDIRPVNRDCLEPVLLLLQNTDPDIQRAASAALGNLAV), 139 to 178 (NENKVLIVEMGGFEPLIRQMMSPNVEVQCNAVGCITNLAT), 180 to 219 (EANKSKIARSGALLPLTKLAKSKDMRVQRNATGALLNMTH), 221 to 260 (DQNRQELVNAGAIPILVSLLSSRDPDVQYYSTTALSNIAV), 264 to 303 (NRKKLSSSEPRLVEHLIKLMDSGSPRVQCQAALALRNLAS), 305 to 344 (SDYQLEIVKANGLPHLFNLFQSTHTPLVLAAVACIRNISI), 346 to 386 (PLNE…NLAA), and 430 to 469 (DELKGTLLELGIAEVLIPLTLSDNIEVQGNSAAALGNLSS).

It belongs to the beta-catenin family.

Its subcellular location is the vacuole membrane. Its function is as follows. Functions in both vacuole inheritance and protein targeting from the cytoplasm to vacuole. This chain is Vacuolar protein 8 (VAC8), found in Yarrowia lipolytica (strain CLIB 122 / E 150) (Yeast).